The following is a 123-amino-acid chain: Thioredoxin domain-containing protein 17 (123 aa).

Ala2 carries the post-translational modification N-acetylalanine. The Thioredoxin domain maps to 41–123; that stretch reads SWCPDCVEAE…SLVEMIFSED (83 aa). Catalysis depends on nucleophile residues Cys43 and Cys46. Cys43 and Cys46 form a disulfide bridge.

The protein belongs to the thioredoxin family. In terms of assembly, interacts with TRXR1 and DYNLL1/DNCL1. In terms of processing, the oxidized protein is reduced by TRXR1.

The protein localises to the cytoplasm. Functionally, disulfide reductase. May participate in various redox reactions through the reversible oxidation of its active center dithiol to a disulfide and catalyze dithiol-disulfide exchange reactions. Modulates TNF-alpha signaling and NF-kappa-B activation. Has peroxidase activity and may contribute to the elimination of cellular hydrogen peroxide. The protein is Thioredoxin domain-containing protein 17 (Txndc17) of Mus musculus (Mouse).